Here is a 267-residue protein sequence, read N- to C-terminus: Type II pantothenate kinase (267 aa).

An ATP-binding site is contributed by 6–13; that stretch reads DAGGTLIK. Residue glutamate 70 is the Proton acceptor of the active site. Residues threonine 99, 121 to 125, tyrosine 137, and serine 225 contribute to the ATP site; that span reads GGMIQ.

It belongs to the type II pantothenate kinase family. Homodimer.

It is found in the cytoplasm. The enzyme catalyses (R)-pantothenate + ATP = (R)-4'-phosphopantothenate + ADP + H(+). It functions in the pathway cofactor biosynthesis; coenzyme A biosynthesis; CoA from (R)-pantothenate: step 1/5. Catalyzes the phosphorylation of pantothenate (Pan), the first step in CoA biosynthesis. This is Type II pantothenate kinase from Staphylococcus aureus (strain Mu50 / ATCC 700699).